The chain runs to 713 residues: MAAGVSLVSDLPYSTSRESNTDMETVNVRVPTAKYTKVGETLRHVIPGHMQCSMACGGRACKYENPSRWSDKEQAVKGLYSSWITDHLLAMARPSTEIVEKFNIIEQFHVCGLKTVINLQRPGEHASCGSTLEPESGFTYRPELFMEAGIYFYNFGWKDYGVASLTTILDMVKVMSFAMQEGKIAVHCHAGLGRTGVLIACFLVFTSRMSADQAILFVRAKRPNSIQTRGQLLCVREFAQFLVPLRSVFSCAEPKAHEVTLSQYLTRQRHLLHGYEARHMKNMPKIIHLICRLLLDIAENRQTVEEEVLEIPDLTEEVEKTVSLQALQQLGKEMRGKGIPISSPRSPDQPNLLGTPCDPPHDQPLCSDQEFDVLWRWPTVDNTYRSRLILSKCFSYSDSALHKLDPRVHVLQSPQNLSSKSGLNFSELYASQSRLALETPDLLPSDIKSSPKHDLLTGSRSSLVQSKKIEEQVSCPPASVKQAPLKVAKRSMSYGFLGRTNDSSTMFSICQVGRSTNKNSNCDVTQHFKDVPILTLQSELSPETRHLFVAKALTVDLDGEELRSKVSVWQMELNSREGAWERLCNERDPVVLSLLMWSWLEQLKEPVITKDDVETLSGNRLNPEHALNSLDKGQKQTLLCILDCAAHLLKIPEEVENAFFERLIKAFTWISSDSENGQLIYKALKDVMVPVLRDLRTKAMEELEFTCHCSFVP.

A Tyrosine-protein phosphatase domain is found at 80–251 (YSSWITDHLL…LVPLRSVFSC (172 aa)). Cysteine 188 functions as the Phosphocysteine intermediate in the catalytic mechanism.

It belongs to the protein-tyrosine phosphatase family. Non-receptor class PTPDC1 subfamily.

Its function is as follows. May play roles in cilia formation and/or maintenance. The sequence is that of Protein tyrosine phosphatase domain-containing protein 1 (ptpdc1) from Danio rerio (Zebrafish).